Reading from the N-terminus, the 317-residue chain is MTMETQMSQNVCPRNLWLLQPLTVLLLLASADSQAAAPPKAVLKLEPPWINVLQEDSVTLTCQGARSPESDSIQWFHNGNLIPTHTQPSYRFKANNNDSGEYTCQTGQTSLSDPVHLTVLSEWLVLQTPHLEFQEGETIMLRCHSWKDKPLVKVTFFQNGKSQKFSHLDPTFSIPQANHSHSGDYHCTGNIGYTLFSSKPVTITVQVPSMGSSSPMGIIVAVVIATAVAAIVAAVVALIYCRKKRISANSTDPVKAAQFEPPGRQMIAIRKRQLEETNNDYETADGGYMTLNPRAPTDDDKNIYLTLPPNDHVNSNN.

Positions 1-33 (MTMETQMSQNVCPRNLWLLQPLTVLLLLASADS) are cleaved as a signal peptide. Residues 34–217 (QAAAPPKAVL…PSMGSSSPMG (184 aa)) are Extracellular-facing. Ig-like C2-type domains are found at residues 39–118 (PKAV…VHLT) and 122–204 (EWLV…VTIT). 2 disulfides stabilise this stretch: C62-C104 and C143-C187. Residues N97 and N178 are each glycosylated (N-linked (GlcNAc...) asparagine). A helical transmembrane segment spans residues 218-240 (IIVAVVIATAVAAIVAAVVALIY). Topologically, residues 241–317 (CRKKRISANS…PPNDHVNSNN (77 aa)) are cytoplasmic. Residues Y288 and Y304 each carry the phosphotyrosine; by SRC-type Tyr-kinases modification. The tract at residues 292–317 (NPRAPTDDDKNIYLTLPPNDHVNSNN) is disordered.

Interacts with IGHG1. Interacts with INPP5D/SHIP1 and INPPL1/SHIP2, regulating its function. Interacts with APCS and FGR. Interacts with HCK. Post-translationally, phosphorylated by SRC-type Tyr-kinases such as LYN, BLK, FYN, HCK and SYK. Found on monocytes, neutrophils and eosinophil platelets.

The protein resides in the cell membrane. Its function is as follows. Binds to the Fc region of immunoglobulins gamma. Low affinity receptor. By binding to IgG it initiates cellular responses against pathogens and soluble antigens. Promotes phagocytosis of opsonized antigens. The chain is Low affinity immunoglobulin gamma Fc region receptor II-a (FCGR2A) from Homo sapiens (Human).